The primary structure comprises 100 residues: Phosphoribosyl-ATP pyrophosphatase (100 aa).

This sequence belongs to the PRA-PH family.

The protein localises to the cytoplasm. The enzyme catalyses 1-(5-phospho-beta-D-ribosyl)-ATP + H2O = 1-(5-phospho-beta-D-ribosyl)-5'-AMP + diphosphate + H(+). It functions in the pathway amino-acid biosynthesis; L-histidine biosynthesis; L-histidine from 5-phospho-alpha-D-ribose 1-diphosphate: step 2/9. This is Phosphoribosyl-ATP pyrophosphatase from Haloquadratum walsbyi (strain DSM 16790 / HBSQ001).